The chain runs to 116 residues: Iron-sulfur cluster insertion protein ErpA (116 aa).

Residues Cys44, Cys108, and Cys110 each coordinate iron-sulfur cluster.

It belongs to the HesB/IscA family. As to quaternary structure, homodimer. Iron-sulfur cluster is required as a cofactor.

Its function is as follows. Required for insertion of 4Fe-4S clusters for at least IspG. This chain is Iron-sulfur cluster insertion protein ErpA, found in Shewanella baltica (strain OS223).